A 342-amino-acid polypeptide reads, in one-letter code: MTNILSPEKSENDQELPIRPSYLQEFVGQQQIKENLSVFIKAAKSRNEHLDHTLFYGPPGLGKTTLAKIISNEIGGNFKSTSGPAILKVADLAAILTNLEKNDVLFIDEIHRLNTAVEEVLYPAMEDFELDIIIGEGSAARSVKITLPKFTLIGATTRLGLLSNPLRDRFGIPMRLNFYNTGELKKVLNRASKLLDIDLTDSGSEEIAKRSRGTPRIALRLLRRIRDFAAVDGKSRVDKEISDFGLNRLEVDRIGLDSNDYRYLKFIADNYNGGPVGIETIAAALSEQRDALEETIEPYLIQIGLLQRTPRGRVITIAAFEHLKMPVPNQSHHQFNIFNENE.

The large ATPase domain (RuvB-L) stretch occupies residues 1-179 (MTNILSPEKS…FGIPMRLNFY (179 aa)). ATP is bound by residues Ile18, Arg19, Gly60, Lys63, Thr64, Thr65, 126–128 (EDF), Arg169, Tyr179, and Arg216. Position 64 (Thr64) interacts with Mg(2+). The interval 180 to 250 (NTGELKKVLN…ISDFGLNRLE (71 aa)) is small ATPAse domain (RuvB-S). The head domain (RuvB-H) stretch occupies residues 253-342 (RIGLDSNDYR…HQFNIFNENE (90 aa)). 3 residues coordinate DNA: Arg289, Arg308, and Arg313.

It belongs to the RuvB family. In terms of assembly, homohexamer. Forms an RuvA(8)-RuvB(12)-Holliday junction (HJ) complex. HJ DNA is sandwiched between 2 RuvA tetramers; dsDNA enters through RuvA and exits via RuvB. An RuvB hexamer assembles on each DNA strand where it exits the tetramer. Each RuvB hexamer is contacted by two RuvA subunits (via domain III) on 2 adjacent RuvB subunits; this complex drives branch migration. In the full resolvosome a probable DNA-RuvA(4)-RuvB(12)-RuvC(2) complex forms which resolves the HJ.

Its subcellular location is the cytoplasm. It carries out the reaction ATP + H2O = ADP + phosphate + H(+). Functionally, the RuvA-RuvB-RuvC complex processes Holliday junction (HJ) DNA during genetic recombination and DNA repair, while the RuvA-RuvB complex plays an important role in the rescue of blocked DNA replication forks via replication fork reversal (RFR). RuvA specifically binds to HJ cruciform DNA, conferring on it an open structure. The RuvB hexamer acts as an ATP-dependent pump, pulling dsDNA into and through the RuvAB complex. RuvB forms 2 homohexamers on either side of HJ DNA bound by 1 or 2 RuvA tetramers; 4 subunits per hexamer contact DNA at a time. Coordinated motions by a converter formed by DNA-disengaged RuvB subunits stimulates ATP hydrolysis and nucleotide exchange. Immobilization of the converter enables RuvB to convert the ATP-contained energy into a lever motion, pulling 2 nucleotides of DNA out of the RuvA tetramer per ATP hydrolyzed, thus driving DNA branch migration. The RuvB motors rotate together with the DNA substrate, which together with the progressing nucleotide cycle form the mechanistic basis for DNA recombination by continuous HJ branch migration. Branch migration allows RuvC to scan DNA until it finds its consensus sequence, where it cleaves and resolves cruciform DNA. The chain is Holliday junction branch migration complex subunit RuvB from Rickettsia conorii (strain ATCC VR-613 / Malish 7).